A 476-amino-acid chain; its full sequence is Glycogen synthase (476 aa).

K15 contacts ADP-alpha-D-glucose.

Belongs to the glycosyltransferase 1 family. Bacterial/plant glycogen synthase subfamily.

The enzyme catalyses [(1-&gt;4)-alpha-D-glucosyl](n) + ADP-alpha-D-glucose = [(1-&gt;4)-alpha-D-glucosyl](n+1) + ADP + H(+). Its pathway is glycan biosynthesis; glycogen biosynthesis. In terms of biological role, synthesizes alpha-1,4-glucan chains using ADP-glucose. The chain is Glycogen synthase from Bacillus cereus (strain ZK / E33L).